The following is a 459-amino-acid chain: 2-(3-amino-3-carboxypropyl)histidine synthase subunit 1 (459 aa).

The segment at 1-68 is disordered; that stretch reads MEDDRAQVDL…AGANTSIEDS (68 aa). A compositionally biased stretch (low complexity) spans 41–61; sequence SAAAGKSSSSSSNSTSQPAGA. C165, C268, and C403 together coordinate [4Fe-4S] cluster.

Belongs to the DPH1/DPH2 family. DPH1 subfamily. As to quaternary structure, component of the 2-(3-amino-3-carboxypropyl)histidine synthase complex composed of dph-1, dph-2, dph-3 and a NADH-dependent reductase, predominantly cbr-1. [4Fe-4S] cluster serves as cofactor.

Its subcellular location is the cytoplasm. The catalysed reaction is L-histidyl-[translation elongation factor 2] + S-adenosyl-L-methionine = 2-[(3S)-amino-3-carboxypropyl]-L-histidyl-[translation elongation factor 2] + S-methyl-5'-thioadenosine + H(+). Its pathway is protein modification; peptidyl-diphthamide biosynthesis. Functionally, catalyzes the first step of diphthamide biosynthesis, a post-translational modification of histidine which occurs in elongation factor 2. Dph-1 and dph-2 transfer a 3-amino-3-carboxypropyl (ACP) group from S-adenosyl-L-methionine (SAM) to a histidine residue, the reaction is assisted by a reduction system comprising dph-3 and a NADH-dependent reductase, predominantly cbr-1. The protein is 2-(3-amino-3-carboxypropyl)histidine synthase subunit 1 (dph-1) of Neurospora crassa (strain ATCC 24698 / 74-OR23-1A / CBS 708.71 / DSM 1257 / FGSC 987).